The chain runs to 102 residues: Cytochrome c oxidase subunit 6a, mitochondrial (102 aa).

The transit peptide at methionine 1 to aspartate 36 directs the protein to the mitochondrion.

It belongs to the cytochrome c oxidase subunit 6A (TC 3.D.4.11) family.

The protein resides in the mitochondrion inner membrane. Functionally, this protein is one of the nuclear-coded polypeptide chains of cytochrome c oxidase, the terminal oxidase in mitochondrial electron transport. In Arabidopsis thaliana (Mouse-ear cress), this protein is Cytochrome c oxidase subunit 6a, mitochondrial (COX6A).